Reading from the N-terminus, the 453-residue chain is Alpha-2B adrenergic receptor (453 aa).

At 1–17 (MSGPTMDHQEPYSVQAT) the chain is on the extracellular side. The helical transmembrane segment at 18–42 (AAIASAITFLILFTIFGNALVILAV) threads the bilayer. The Cytoplasmic portion of the chain corresponds to 43 to 54 (LTSRSLRAPQNL). Residues 55–80 (FLVSLAAADILVATLIIPFSLANELL) traverse the membrane as a helical segment. Over 81–90 (GYWYFWRAWC) the chain is Extracellular. Cysteines 90 and 169 form a disulfide. Residues 91 to 113 (EVYLALDVLFCTSSIVHLCAISL) form a helical membrane-spanning segment. At 114–135 (DRYWAVSRALEYNSKRTPRRIK) the chain is on the cytoplasmic side. The chain crosses the membrane as a helical span at residues 136–158 (CIILTVWLIAAVISLPPLIYKGD). Residues 159 to 174 (QRPEPRGLPQCELNQE) lie on the Extracellular side of the membrane. A helical membrane pass occupies residues 175-198 (AWYILASSIGSFFAPCLIMILVYL). Topologically, residues 199 to 375 (RIYVIAKRSH…LSREKRFTFV (177 aa)) are cytoplasmic. A disordered region spans residues 213–331 (GAKRGSGEGE…PASVCNPPLQ (119 aa)). Polar residues predominate over residues 287–297 (GQGQKKGTSGA). Over residues 300–314 (EEGDEEDEEEVEECE) the composition is skewed to acidic residues. Residues 376–399 (LAVVIGVFVVCWFPFFFSYSLGAI) traverse the membrane as a helical segment. Topologically, residues 400–408 (CPQHCKVPH) are extracellular. The chain crosses the membrane as a helical span at residues 409-432 (GLFQFFFWIGYCNSSLNPVIYTVF). Topologically, residues 433–453 (NQDFRRAFRRILCRPWTQTGW) are cytoplasmic. Cysteine 445 is lipidated: S-palmitoyl cysteine.

Belongs to the G-protein coupled receptor 1 family. Adrenergic receptor subfamily. ADRA2B sub-subfamily. In terms of assembly, interacts with RAB26. Interacts with PPP1R9B. Interacts with GGA1, GGA2 and GGA3.

The protein localises to the cell membrane. Alpha-2 adrenergic receptors mediate the catecholamine-induced inhibition of adenylate cyclase through the action of G proteins. In Rattus norvegicus (Rat), this protein is Alpha-2B adrenergic receptor (Adra2b).